Here is a 248-residue protein sequence, read N- to C-terminus: Enolase-phosphatase E1 (248 aa).

Mg(2+) is bound by residues Asp14 and Glu16. Substrate is bound by residues 145 to 146 and Lys179; that span reads SS. Asp204 lines the Mg(2+) pocket.

The protein belongs to the HAD-like hydrolase superfamily. MasA/MtnC family. In terms of assembly, monomer. The cofactor is Mg(2+).

It is found in the cytoplasm. It localises to the nucleus. The catalysed reaction is 5-methylsulfanyl-2,3-dioxopentyl phosphate + H2O = 1,2-dihydroxy-5-(methylsulfanyl)pent-1-en-3-one + phosphate. It functions in the pathway amino-acid biosynthesis; L-methionine biosynthesis via salvage pathway; L-methionine from S-methyl-5-thio-alpha-D-ribose 1-phosphate: step 3/6. The protein operates within amino-acid biosynthesis; L-methionine biosynthesis via salvage pathway; L-methionine from S-methyl-5-thio-alpha-D-ribose 1-phosphate: step 4/6. Its function is as follows. Bifunctional enzyme that catalyzes the enolization of 2,3-diketo-5-methylthiopentyl-1-phosphate (DK-MTP-1-P) into the intermediate 2-hydroxy-3-keto-5-methylthiopentenyl-1-phosphate (HK-MTPenyl-1-P), which is then dephosphorylated to form the acireductone 1,2-dihydroxy-3-keto-5-methylthiopentene (DHK-MTPene). The polypeptide is Enolase-phosphatase E1 (Caenorhabditis elegans).